We begin with the raw amino-acid sequence, 65 residues long: Ferredoxin-like protein in vnf region (65 aa).

2 consecutive 4Fe-4S ferredoxin-type domains span residues Ala-2 to Asp-30 and Tyr-32 to Asp-65. Residues Cys-10, Cys-13, Cys-16, Cys-20, Cys-39, Cys-42, Cys-50, and Cys-54 each contribute to the [4Fe-4S] cluster site.

The cofactor is [4Fe-4S] cluster.

This Azotobacter vinelandii protein is Ferredoxin-like protein in vnf region.